The following is a 145-amino-acid chain: MQEVIIYSDGACKGNPGRGGWGAVLVAGTNEKELFGGEANTTNNRMEMTAVIEALRALKRPCTVQVYTDSQYVQKGISEWLPGWKARGWKTADKKPVKNADLWQELDTLVQPHKITWHWVRGHNGHPGNERADALANRGVASLAS.

One can recognise an RNase H type-1 domain in the interval 1-141 (MQEVIIYSDG…ADALANRGVA (141 aa)). Mg(2+) is bound by residues Asp-9, Glu-47, Asp-69, and Asp-133.

Belongs to the RNase H family. In terms of assembly, monomer. It depends on Mg(2+) as a cofactor.

The protein localises to the cytoplasm. It catalyses the reaction Endonucleolytic cleavage to 5'-phosphomonoester.. Its function is as follows. Endonuclease that specifically degrades the RNA of RNA-DNA hybrids. This is Ribonuclease H from Cupriavidus pinatubonensis (strain JMP 134 / LMG 1197) (Cupriavidus necator (strain JMP 134)).